Reading from the N-terminus, the 335-residue chain is Galactosylgalactosylxylosylprotein 3-beta-glucuronosyltransferase 3 (335 aa).

The Cytoplasmic portion of the chain corresponds to Met-1–Asn-7. A helical; Signal-anchor for type II membrane protein membrane pass occupies residues Val-8–Gly-28. Residues Gln-29–Val-335 lie on the Lumenal side of the membrane. UDP-alpha-D-glucuronate contacts are provided by residues Pro-82–Tyr-84, Asp-113, Arg-156, Arg-161, and Asp-194–Asp-196. Position 196 (Asp-196) interacts with Mn(2+). The segment at Trp-243 to Asp-252 is interaction with galactose moiety of substrate glycoprotein. The Proton donor/acceptor role is filled by Glu-281. The N-linked (GlcNAc...) asparagine glycan is linked to Asn-300. His-308–Arg-310 serves as a coordination point for UDP-alpha-D-glucuronate. Positions Glu-312–Leu-322 are enriched in basic and acidic residues. The disordered stretch occupies residues Glu-312–Val-335.

Belongs to the glycosyltransferase 43 family. In terms of assembly, homodimer; disulfide-linked. Interacts with PXYLP1; the interaction increases the 2-phosphoxylose phosphatase activity of PXYLP1 during completion of linkage region formation in a B3GAT3-mediated manner. Requires Mn(2+) as cofactor. Post-translationally, N-glycosylated. As to expression, ubiquitous (but weakly expressed in all tissues examined).

The protein localises to the golgi apparatus membrane. It localises to the golgi apparatus. It is found in the cis-Golgi network. It catalyses the reaction 3-O-(beta-D-galactosyl-(1-&gt;3)-beta-D-galactosyl-(1-&gt;4)-beta-D-xylosyl)-L-seryl-[protein] + UDP-alpha-D-glucuronate = 3-O-(beta-D-GlcA-(1-&gt;3)-beta-D-Gal-(1-&gt;3)-beta-D-Gal-(1-&gt;4)-beta-D-Xyl)-L-seryl-[protein] + UDP + H(+). It functions in the pathway protein modification; protein glycosylation. With respect to regulation, inhibited by EDTA. Functionally, glycosaminoglycans biosynthesis. Involved in forming the linkage tetrasaccharide present in heparan sulfate and chondroitin sulfate. Transfers a glucuronic acid moiety from the uridine diphosphate-glucuronic acid (UDP-GlcUA) to the common linkage region trisaccharide Gal-beta-1,3-Gal-beta-1,4-Xyl covalently bound to a Ser residue at the glycosaminylglycan attachment site of proteoglycans. Can also play a role in the biosynthesis of l2/HNK-1 carbohydrate epitope on glycoproteins. Shows strict specificity for Gal-beta-1,3-Gal-beta-1,4-Xyl, exhibiting negligible incorporation into other galactoside substrates including Galbeta1-3Gal beta1-O-benzyl, Galbeta1-4GlcNAc and Galbeta1-4Glc. Stimulates 2-phosphoxylose phosphatase activity of PXYLP1 in presence of uridine diphosphate-glucuronic acid (UDP-GlcUA) during completion of linkage region formation. This is Galactosylgalactosylxylosylprotein 3-beta-glucuronosyltransferase 3 (B3GAT3) from Homo sapiens (Human).